The following is a 438-amino-acid chain: ATP-dependent RNA helicase RhlB (438 aa).

Residues 9–37 (QRFADLPLHPEVKQALAENGFEFCTPIQA) carry the Q motif motif. Residues 40 to 219 (LPVLLQSKDI…YDHMNEPVKV (180 aa)) form the Helicase ATP-binding domain. An ATP-binding site is contributed by 53–60 (AQTGTGKT). Residues 165-168 (DEAD) carry the DEAD box motif. The region spanning 243 to 390 (KMRLLLTLIE…VSNYDSEALL (148 aa)) is the Helicase C-terminal domain. The disordered stretch occupies residues 395 to 438 (TPAKIHRKHPSGTRNLRDRSGTSRPGAQRSGARPPRHDRTRRHS). Basic residues predominate over residues 428-438 (PPRHDRTRRHS).

Belongs to the DEAD box helicase family. RhlB subfamily. As to quaternary structure, component of the RNA degradosome, which is a multiprotein complex involved in RNA processing and mRNA degradation.

It localises to the cytoplasm. The enzyme catalyses ATP + H2O = ADP + phosphate + H(+). DEAD-box RNA helicase involved in RNA degradation. Has RNA-dependent ATPase activity and unwinds double-stranded RNA. The protein is ATP-dependent RNA helicase RhlB of Shewanella baltica (strain OS223).